A 393-amino-acid polypeptide reads, in one-letter code: Phosphoglycerate kinase (393 aa).

Substrate contacts are provided by residues 21 to 23, R36, 59 to 62, R114, and R147; these read DIN and HFGR. ATP contacts are provided by residues K197, E319, and 349-352; that span reads GGDT.

It belongs to the phosphoglycerate kinase family. In terms of assembly, monomer.

It localises to the cytoplasm. The enzyme catalyses (2R)-3-phosphoglycerate + ATP = (2R)-3-phospho-glyceroyl phosphate + ADP. It functions in the pathway carbohydrate degradation; glycolysis; pyruvate from D-glyceraldehyde 3-phosphate: step 2/5. The chain is Phosphoglycerate kinase from Dinoroseobacter shibae (strain DSM 16493 / NCIMB 14021 / DFL 12).